The chain runs to 386 residues: S-adenosylmethionine synthase (386 aa).

His17 provides a ligand contact to ATP. Position 19 (Asp19) interacts with Mg(2+). Glu45 contacts K(+). Positions 58 and 101 each coordinate L-methionine. Residues 101–111 (QSPDISQGVTE) are flexible loop. Residues 168–170 (DAK), Asp242, 248–249 (RK), Ala265, and Lys269 each bind ATP. Asp242 is an L-methionine binding site. Lys273 contributes to the L-methionine binding site.

Belongs to the AdoMet synthase family. In terms of assembly, homotetramer; dimer of dimers. The cofactor is Mg(2+). K(+) is required as a cofactor.

It localises to the cytoplasm. It catalyses the reaction L-methionine + ATP + H2O = S-adenosyl-L-methionine + phosphate + diphosphate. It participates in amino-acid biosynthesis; S-adenosyl-L-methionine biosynthesis; S-adenosyl-L-methionine from L-methionine: step 1/1. Its function is as follows. Catalyzes the formation of S-adenosylmethionine (AdoMet) from methionine and ATP. The overall synthetic reaction is composed of two sequential steps, AdoMet formation and the subsequent tripolyphosphate hydrolysis which occurs prior to release of AdoMet from the enzyme. The sequence is that of S-adenosylmethionine synthase from Leptospira interrogans serogroup Icterohaemorrhagiae serovar copenhageni (strain Fiocruz L1-130).